Consider the following 165-residue polypeptide: Growth arrest and DNA damage-inducible protein GADD45 alpha (165 aa).

At T2 the chain carries Phosphothreonine.

It belongs to the GADD45 family. In terms of assembly, interacts with AURKA, PCNA, GADD45GIP1 and MAPK14.

The protein resides in the nucleus. Functionally, might affect PCNA interaction with some CDK (cell division protein kinase) complexes; stimulates DNA excision repair in vitro and inhibits entry of cells into S phase. In T-cells, functions as a regulator of p38 MAPKs by inhibiting p88 phosphorylation and activity. In Felis catus (Cat), this protein is Growth arrest and DNA damage-inducible protein GADD45 alpha (GADD45A).